The chain runs to 552 residues: Esterase E4 (552 aa).

Residues 1–23 (MKNTCGILLNLFLFIGCFLTCSA) form the signal peptide. An N-linked (GlcNAc...) asparagine glycan is attached at N81. C89 and C106 are disulfide-bonded. The active-site Acyl-ester intermediate is the S214. Residues C266 and C277 are joined by a disulfide bond. N269 carries N-linked (GlcNAc...) asparagine glycosylation. The active-site Charge relay system is E339. Residues N371, N404, and N443 are each glycosylated (N-linked (GlcNAc...) asparagine). H463 (charge relay system) is an active-site residue.

Belongs to the type-B carboxylesterase/lipase family.

It carries out the reaction a carboxylic ester + H2O = an alcohol + a carboxylate + H(+). Overproduction of nonspecific esterases is a common mechanism of resistance to organophosphate insecticides. This Myzus persicae (Green peach aphid) protein is Esterase E4.